The primary structure comprises 258 residues: Transcription factor ORG3 (258 aa).

The region spanning 76–128 (VKKLNHNASERDRRRKINSLFSSLRSCLPASGQSKKLSIPATVSRSLKYIPEL) is the bHLH domain.

Homodimer. As to expression, expressed in vascular tissues. Detected in roots.

The protein resides in the nucleus. This chain is Transcription factor ORG3 (ORG3), found in Arabidopsis thaliana (Mouse-ear cress).